The following is a 279-amino-acid chain: Ribosomal RNA small subunit methyltransferase A (279 aa).

Positions 10, 12, 37, 58, 83, and 108 each coordinate S-adenosyl-L-methionine.

This sequence belongs to the class I-like SAM-binding methyltransferase superfamily. rRNA adenine N(6)-methyltransferase family. RsmA subfamily.

It is found in the cytoplasm. The catalysed reaction is adenosine(1518)/adenosine(1519) in 16S rRNA + 4 S-adenosyl-L-methionine = N(6)-dimethyladenosine(1518)/N(6)-dimethyladenosine(1519) in 16S rRNA + 4 S-adenosyl-L-homocysteine + 4 H(+). Functionally, specifically dimethylates two adjacent adenosines (A1518 and A1519) in the loop of a conserved hairpin near the 3'-end of 16S rRNA in the 30S particle. May play a critical role in biogenesis of 30S subunits. In Synechococcus elongatus (strain ATCC 33912 / PCC 7942 / FACHB-805) (Anacystis nidulans R2), this protein is Ribosomal RNA small subunit methyltransferase A.